Reading from the N-terminus, the 144-residue chain is Protein NrdI (144 aa).

Belongs to the NrdI family.

Its function is as follows. Probably involved in ribonucleotide reductase function. In Streptococcus pyogenes serotype M4 (strain MGAS10750), this protein is Protein NrdI.